The following is a 514-amino-acid chain: 2-isopropylmalate synthase (514 aa).

The Pyruvate carboxyltransferase domain maps to 5-267; the sequence is VIIFDTTLRD…ETNIKHEEIH (263 aa). Mn(2+) contacts are provided by Asp-14, His-202, His-204, and Asn-238. The regulatory domain stretch occupies residues 392–514; the sequence is KLNYLSVQSG…AEIKERIATV (123 aa).

It belongs to the alpha-IPM synthase/homocitrate synthase family. LeuA type 1 subfamily. As to quaternary structure, homodimer. Mn(2+) is required as a cofactor.

Its subcellular location is the cytoplasm. It carries out the reaction 3-methyl-2-oxobutanoate + acetyl-CoA + H2O = (2S)-2-isopropylmalate + CoA + H(+). It functions in the pathway amino-acid biosynthesis; L-leucine biosynthesis; L-leucine from 3-methyl-2-oxobutanoate: step 1/4. Catalyzes the condensation of the acetyl group of acetyl-CoA with 3-methyl-2-oxobutanoate (2-ketoisovalerate) to form 3-carboxy-3-hydroxy-4-methylpentanoate (2-isopropylmalate). The sequence is that of 2-isopropylmalate synthase from Photobacterium profundum (strain SS9).